The sequence spans 82 residues: Large ribosomal subunit protein bL31B (82 aa).

This sequence belongs to the bacterial ribosomal protein bL31 family. Type B subfamily. In terms of assembly, part of the 50S ribosomal subunit.

The protein is Large ribosomal subunit protein bL31B of Pectobacterium carotovorum subsp. carotovorum (strain PC1).